The primary structure comprises 397 residues: S-adenosylmethionine synthase (397 aa).

Residue His-16 coordinates ATP. Position 18 (Asp-18) interacts with Mg(2+). Glu-44 is a binding site for K(+). L-methionine-binding residues include Glu-57 and Gln-100. The flexible loop stretch occupies residues 100-110 (QSPDIAQGVNE). Residues 175-177 (DAK), 242-243 (RF), Asp-251, 257-258 (RK), Ala-274, and Lys-278 contribute to the ATP site. Residue Asp-251 participates in L-methionine binding. Lys-282 contributes to the L-methionine binding site.

It belongs to the AdoMet synthase family. As to quaternary structure, homotetramer; dimer of dimers. Mg(2+) serves as cofactor. The cofactor is K(+).

The protein resides in the cytoplasm. The catalysed reaction is L-methionine + ATP + H2O = S-adenosyl-L-methionine + phosphate + diphosphate. It participates in amino-acid biosynthesis; S-adenosyl-L-methionine biosynthesis; S-adenosyl-L-methionine from L-methionine: step 1/1. Catalyzes the formation of S-adenosylmethionine (AdoMet) from methionine and ATP. The overall synthetic reaction is composed of two sequential steps, AdoMet formation and the subsequent tripolyphosphate hydrolysis which occurs prior to release of AdoMet from the enzyme. The sequence is that of S-adenosylmethionine synthase from Streptococcus thermophilus (strain ATCC BAA-250 / LMG 18311).